Here is a 433-residue protein sequence, read N- to C-terminus: Serine hydroxymethyltransferase (433 aa).

Residues Leu-132 and 136–138 each bind (6S)-5,6,7,8-tetrahydrofolate; that span reads GHL. Lys-241 is modified (N6-(pyridoxal phosphate)lysine).

It belongs to the SHMT family. In terms of assembly, homodimer. Requires pyridoxal 5'-phosphate as cofactor.

The protein resides in the cytoplasm. The enzyme catalyses (6R)-5,10-methylene-5,6,7,8-tetrahydrofolate + glycine + H2O = (6S)-5,6,7,8-tetrahydrofolate + L-serine. It participates in one-carbon metabolism; tetrahydrofolate interconversion. Its pathway is amino-acid biosynthesis; glycine biosynthesis; glycine from L-serine: step 1/1. Functionally, catalyzes the reversible interconversion of serine and glycine with tetrahydrofolate (THF) serving as the one-carbon carrier. This reaction serves as the major source of one-carbon groups required for the biosynthesis of purines, thymidylate, methionine, and other important biomolecules. Also exhibits THF-independent aldolase activity toward beta-hydroxyamino acids, producing glycine and aldehydes, via a retro-aldol mechanism. The sequence is that of Serine hydroxymethyltransferase from Bradyrhizobium sp. (strain ORS 278).